The primary structure comprises 130 residues: MAENQYYGTGRRKSSTARVFIKAGSGKIVINQRSLEQYFGRPTARMVVRQPLELVEMTEKLDLYITVNGGGISGQAGAIRHGITRALMQYDETLRSELRKAGFVTRDARKVERKKVGLHKARKRPQYSKR.

Belongs to the universal ribosomal protein uS9 family.

The polypeptide is Small ribosomal subunit protein uS9 (Aeromonas hydrophila subsp. hydrophila (strain ATCC 7966 / DSM 30187 / BCRC 13018 / CCUG 14551 / JCM 1027 / KCTC 2358 / NCIMB 9240 / NCTC 8049)).